Consider the following 259-residue polypeptide: Sesquipedalian-2 (259 aa).

Residues 17–121 (PADHTGFLRS…WVKALSRASF (105 aa)) enclose the PH domain. A coiled-coil region spans residues 124–150 (MRLVVRELESQLQDARQSLALHRCASQ). Positions 155–178 (SCSKSQAPDHRAPDPENGHFLPRD) are disordered. Residues 161 to 178 (APDHRAPDPENGHFLPRD) show a composition bias toward basic and acidic residues. The F&amp;H signature appears at 223-235 (CFSTLHDWYGKEI).

This sequence belongs to the sesquipedalian family. In terms of assembly, forms homodimers and heterodimers with PHETA1. Interacts with OCRL and INPP5B.

Its subcellular location is the early endosome. It localises to the recycling endosome. It is found in the golgi apparatus. The protein localises to the trans-Golgi network. The protein resides in the cytoplasmic vesicle. Its subcellular location is the clathrin-coated vesicle. Functionally, plays a role in endocytic trafficking. Required for receptor recycling from endosomes, both to the trans-Golgi network and the plasma membrane. This chain is Sesquipedalian-2, found in Mus musculus (Mouse).